The sequence spans 469 residues: Adenosylhomocysteinase (469 aa).

3 residues coordinate substrate: T63, D139, and E164. 165-167 (TTT) provides a ligand contact to NAD(+). Substrate is bound by residues K194 and D198. NAD(+) is bound by residues N199, 228 to 233 (GYGDVG), E251, N300, 321 to 323 (IGH), and N375.

Belongs to the adenosylhomocysteinase family. It depends on NAD(+) as a cofactor.

It is found in the cytoplasm. The enzyme catalyses S-adenosyl-L-homocysteine + H2O = L-homocysteine + adenosine. Its pathway is amino-acid biosynthesis; L-homocysteine biosynthesis; L-homocysteine from S-adenosyl-L-homocysteine: step 1/1. Functionally, may play a key role in the regulation of the intracellular concentration of adenosylhomocysteine. This is Adenosylhomocysteinase from Pseudomonas fluorescens (strain ATCC BAA-477 / NRRL B-23932 / Pf-5).